The primary structure comprises 506 residues: UBX domain-containing protein 4 (506 aa).

The interaction with UBQLN1 stretch occupies residues 1-199; that stretch reads MLWFQGAIPA…PAEDLTVRVE (199 aa). Over 1–411 the chain is Cytoplasmic; it reads MLWFQGAIPA…VHSSSGDIWT (411 aa). The disordered stretch occupies residues 110-194; the sequence is QQMHSSKGEA…CSNQRPAEDL (85 aa). Polar residues-rich tracts occupy residues 120 to 136 and 153 to 167; these read SVTN…TPSA and LCET…SDTA. The region spanning 313 to 391 is the UBX domain; that stretch reads DRSTIARIQF…ELAPSASVVL (79 aa). Residues 412–432 lie within the membrane without spanning it; it reads LLGTVLYPFLAIWRLISNFLF. Residues 433-506 are Cytoplasmic-facing; it reads SNPPPAQTSA…TWNGNSTQQM (74 aa). The disordered stretch occupies residues 437–506; that stretch reads PAQTSARATS…TWNGNSTQQM (70 aa). Positions 444 to 456 are enriched in low complexity; that stretch reads ATSTEPSNSASSS. Positions 457 to 489 are enriched in basic and acidic residues; it reads KSEKREPVRKRMLEKRGEDFKKEGKIYRLRTQD. Phosphothreonine is present on Thr487. Over residues 496-506 the composition is skewed to polar residues; sequence NTWNGNSTQQM.

In terms of assembly, directly interacts with VCP. Interacts with UBQLN1. Forms a complex with VCP and UBQLN1. Expressed in many tissues, including brain, heart, kidney, liver, muscle and spleen (at protein level).

The protein resides in the endoplasmic reticulum membrane. Its subcellular location is the nucleus envelope. Its function is as follows. Involved in endoplasmic reticulum-associated protein degradation (ERAD). Acts as a platform to recruit both UBQLN1 and VCP to the ER during ERAD. This Mus musculus (Mouse) protein is UBX domain-containing protein 4 (Ubxn4).